Reading from the N-terminus, the 392-residue chain is Phospho-N-acetylmuramoyl-pentapeptide-transferase (392 aa).

11 helical membrane passes run 24-44 (YLTL…LIAG), 76-96 (TMGG…WFDL), 100-120 (FVWI…VDDW), 137-157 (YFWQ…SISE), 167-187 (FITW…GLLV), 193-213 (VSYP…IVGS), 225-245 (GLAI…AYVT), 262-282 (SGEL…FLWF), 289-309 (VFMG…IAVI), 314-334 (IVLA…MLQV), and 369-389 (QVVV…LTTL).

It belongs to the glycosyltransferase 4 family. MraY subfamily. Mg(2+) is required as a cofactor.

It is found in the cell inner membrane. The enzyme catalyses UDP-N-acetyl-alpha-D-muramoyl-L-alanyl-gamma-D-glutamyl-meso-2,6-diaminopimeloyl-D-alanyl-D-alanine + di-trans,octa-cis-undecaprenyl phosphate = di-trans,octa-cis-undecaprenyl diphospho-N-acetyl-alpha-D-muramoyl-L-alanyl-D-glutamyl-meso-2,6-diaminopimeloyl-D-alanyl-D-alanine + UMP. It functions in the pathway cell wall biogenesis; peptidoglycan biosynthesis. Functionally, catalyzes the initial step of the lipid cycle reactions in the biosynthesis of the cell wall peptidoglycan: transfers peptidoglycan precursor phospho-MurNAc-pentapeptide from UDP-MurNAc-pentapeptide onto the lipid carrier undecaprenyl phosphate, yielding undecaprenyl-pyrophosphoryl-MurNAc-pentapeptide, known as lipid I. This is Phospho-N-acetylmuramoyl-pentapeptide-transferase from Acidovorax ebreus (strain TPSY) (Diaphorobacter sp. (strain TPSY)).